Here is a 166-residue protein sequence, read N- to C-terminus: Large ribosomal subunit protein uL10 (166 aa).

This sequence belongs to the universal ribosomal protein uL10 family. As to quaternary structure, part of the ribosomal stalk of the 50S ribosomal subunit. The N-terminus interacts with L11 and the large rRNA to form the base of the stalk. The C-terminus forms an elongated spine to which L12 dimers bind in a sequential fashion forming a multimeric L10(L12)X complex.

Its function is as follows. Forms part of the ribosomal stalk, playing a central role in the interaction of the ribosome with GTP-bound translation factors. The polypeptide is Large ribosomal subunit protein uL10 (Streptococcus pneumoniae (strain 70585)).